The primary structure comprises 108 residues: uncharacterized protein (108 aa).

G2 carries the N-myristoyl glycine; by host lipid modification.

This is an uncharacterized protein from Acanthamoeba polyphaga (Amoeba).